Reading from the N-terminus, the 119-residue chain is Small ribosomal subunit protein bS16 (119 aa).

Positions 81-119 are disordered; sequence GLAKRPARNNPKKAEPGQKAKERAAARAEKAGAGDDAAA. The span at 92 to 113 shows a compositional bias: basic and acidic residues; that stretch reads KKAEPGQKAKERAAARAEKAGA.

This sequence belongs to the bacterial ribosomal protein bS16 family.

This is Small ribosomal subunit protein bS16 from Methylobacterium sp. (strain 4-46).